A 673-amino-acid chain; its full sequence is Putative transcription factor tau subunit sfc9 (673 aa).

In terms of assembly, may be a component of the TFIIIC complex.

The protein localises to the nucleus. This Schizosaccharomyces pombe (strain 972 / ATCC 24843) (Fission yeast) protein is Putative transcription factor tau subunit sfc9.